The following is a 219-amino-acid chain: Urease accessory protein UreG (219 aa).

The interval 1 to 20 (MSALHSIPHRSKKLPPLRVG) is disordered. 23 to 30 (GPVGSGKT) serves as a coordination point for GTP.

It belongs to the SIMIBI class G3E GTPase family. UreG subfamily. In terms of assembly, homodimer. UreD, UreF and UreG form a complex that acts as a GTP-hydrolysis-dependent molecular chaperone, activating the urease apoprotein by helping to assemble the nickel containing metallocenter of UreC. The UreE protein probably delivers the nickel.

Its subcellular location is the cytoplasm. Facilitates the functional incorporation of the urease nickel metallocenter. This process requires GTP hydrolysis, probably effectuated by UreG. The protein is Urease accessory protein UreG of Methylibium petroleiphilum (strain ATCC BAA-1232 / LMG 22953 / PM1).